Consider the following 225-residue polypeptide: 3-dehydroquinate dehydratase (225 aa).

3-dehydroquinate-binding positions include Ser-6, 30-32 (EWR), and Arg-62. Catalysis depends on His-118, which acts as the Proton donor/acceptor. The active-site Schiff-base intermediate with substrate is the Lys-143. Residues Arg-186, Ser-205, and Gln-209 each contribute to the 3-dehydroquinate site.

The protein belongs to the type-I 3-dehydroquinase family. Homodimer.

The enzyme catalyses 3-dehydroquinate = 3-dehydroshikimate + H2O. It functions in the pathway metabolic intermediate biosynthesis; chorismate biosynthesis; chorismate from D-erythrose 4-phosphate and phosphoenolpyruvate: step 3/7. In terms of biological role, involved in the third step of the chorismate pathway, which leads to the biosynthesis of aromatic amino acids. Catalyzes the cis-dehydration of 3-dehydroquinate (DHQ) and introduces the first double bond of the aromatic ring to yield 3-dehydroshikimate. In Streptococcus pneumoniae (strain ATCC 700669 / Spain 23F-1), this protein is 3-dehydroquinate dehydratase.